We begin with the raw amino-acid sequence, 427 residues long: Trigger factor (427 aa).

The region spanning 163-248 (GDTVVIDFVG…VHEVKSKEVP (86 aa)) is the PPIase FKBP-type domain.

The protein belongs to the FKBP-type PPIase family. Tig subfamily.

The protein localises to the cytoplasm. It catalyses the reaction [protein]-peptidylproline (omega=180) = [protein]-peptidylproline (omega=0). Its function is as follows. Involved in protein export. Acts as a chaperone by maintaining the newly synthesized protein in an open conformation. Functions as a peptidyl-prolyl cis-trans isomerase. The sequence is that of Trigger factor from Streptococcus uberis (strain ATCC BAA-854 / 0140J).